The sequence spans 61 residues: Translational regulator CsrA (61 aa).

It belongs to the CsrA/RsmA family. As to quaternary structure, homodimer; the beta-strands of each monomer intercalate to form a hydrophobic core, while the alpha-helices form wings that extend away from the core.

It localises to the cytoplasm. Its function is as follows. A key translational regulator that binds mRNA to regulate translation initiation and/or mRNA stability. Mediates global changes in gene expression, shifting from rapid growth to stress survival by linking envelope stress, the stringent response and the catabolite repression systems. Usually binds in the 5'-UTR; binding at or near the Shine-Dalgarno sequence prevents ribosome-binding, repressing translation, binding elsewhere in the 5'-UTR can activate translation and/or stabilize the mRNA. Its function is antagonized by small RNA(s). The sequence is that of Translational regulator CsrA from Glaesserella parasuis serovar 5 (strain SH0165) (Haemophilus parasuis).